A 231-amino-acid polypeptide reads, in one-letter code: Eukaryotic translation initiation factor 4E-1 (231 aa).

EIF4G-binding regions lie at residues 56–59 (HPLE) and 66–102 (FDNP…NNIH). Residues 74–79 (RQTAWG), Lys-106, and 124–125 (WE) contribute to the mRNA site. Cys-129 and Cys-167 form a disulfide bridge. An EIF4G-binding region spans residues 150–159 (YTLLAMIGHQ). MRNA-binding positions include 174–179 (RAKGEK) and 219–223 (KRLDR).

It belongs to the eukaryotic initiation factor 4E family. In terms of assembly, EIF4F is a multi-subunit complex, the composition of which varies with external and internal environmental conditions. It is composed of at least EIF4A, EIF4E and EIF4G. EIF4E is also known to interact with other partners. In higher plants two isoforms of EIF4F have been identified, named isoform EIF4F and isoform EIF(iso)4F. Isoform EIF4F has subunits p220 and p26, whereas isoform EIF(iso)4F has subunits p82 and p28. As to quaternary structure, (Microbial infection) Interacts with potyvirus viral genome-linked protein (VPg); mostly with tobacco etch virus (TEV-HAT) VPg and, to a lower extent, with potato virus Y (PVY-LYE84 and PVY-LYE90) and pepper mottle virus (PepMoV) VPg. According to the redox status, the Cys-129-Cys-167 disulfide bridge may have a role in regulating protein function by affecting its ability to bind capped mRNA.

Its subcellular location is the nucleus. The protein resides in the cytoplasm. In terms of biological role, component of the protein complex eIF4F, which is involved in the recognition of the mRNA cap, ATP-dependent unwinding of 5'-terminal secondary structure and recruitment of mRNA to the ribosome. Recognizes and binds the 7-methylguanosine-containing mRNA cap during an early step in the initiation of protein synthesis and facilitates ribosome binding by inducing the unwinding of the mRNAs secondary structures. Key component of recessive resistance to potyviruses. Its function is as follows. (Microbial infection) Susceptibility host factor required for viral infection (e.g. potato virus Y (PVY), pepper mottle virus (PepMoV) and tobacco etch virus (TEV)) by recruiting viral RNAs to the host ribosomal complex via an interaction with viral genome-linked protein (VPg). This is Eukaryotic translation initiation factor 4E-1 from Solanum lycopersicum (Tomato).